A 381-amino-acid polypeptide reads, in one-letter code: GDP-mannose transporter (381 aa).

Residues 1-12 (MSDDKKSDDYRV) show a composition bias toward basic and acidic residues. The segment at 1–28 (MSDDKKSDDYRVDMPSSRTSRAPSPIMR) is disordered. The Cytoplasmic segment spans residues 1–36 (MSDDKKSDDYRVDMPSSRTSRAPSPIMRPALKSAPS). Residues 37–57 (LTENPMAAVLAYCASSILMTV) form a helical membrane-spanning segment. Topologically, residues 58–67 (TNKYVLSGVD) are lumenal. A helical transmembrane segment spans residues 68–88 (FNLNFFLLCVQSVVCVTAISI). Residues 89-107 (CKAAGLITYRDFNTDEAKK) lie on the Cytoplasmic side of the membrane. Residues 108-126 (WFPISLLLIGMIYTGTWAL) form a helical membrane-spanning segment. Residues 127–130 (KYLS) lie on the Lumenal side of the membrane. Residues 131–153 (IPVYTIFKNLTIILIAYGEVLWF) traverse the membrane as a helical segment. At 154-161 (GGSVTPMT) the chain is on the cytoplasmic side. The helical transmembrane segment at 162–184 (LFSFGLMVLSSIIAAWADIQHAL) threads the bilayer. The Lumenal segment spans residues 185 to 199 (NSFGQQSEAANEALS). A helical transmembrane segment spans residues 200 to 220 (TMHAGYLWMAFNCVCSATYLL). Over 221-242 (SMRKRIKLTNFKDYDTMYYNNL) the chain is Cytoplasmic. A helical transmembrane segment spans residues 243 to 263 (LTIPILLVASILVEDWSSANI). The Lumenal portion of the chain corresponds to 264-274 (QKNFPPEQRNT). Residues 275–295 (VIMVMVISGMSTVFISYTSAW) form a helical membrane-spanning segment. Residues 296–303 (AVRVTSST) are Cytoplasmic-facing. Residues 304–324 (TYSMVGALNKLPIAISGLVFF) form a helical membrane-spanning segment. The Lumenal portion of the chain corresponds to 325-327 (DAP). Residues 328-348 (VTFGSVSAIFVGFVSGIVYAV) form a helical membrane-spanning segment. Residues 349–381 (AKVRQNSKPKTVLPTTNIPLSASSRSMQDSLKA) are Cytoplasmic-facing.

It belongs to the TPT transporter family. SLC35D subfamily. Homooligomer.

Its subcellular location is the golgi apparatus membrane. It localises to the cytoplasmic vesicle membrane. It is found in the endoplasmic reticulum membrane. Its function is as follows. Involved in the import of GDP-mannose from the cytoplasm into the Golgi lumen. The sequence is that of GDP-mannose transporter (VRG4) from Phaeosphaeria nodorum (strain SN15 / ATCC MYA-4574 / FGSC 10173) (Glume blotch fungus).